The following is a 215-amino-acid chain: UPF0502 protein YceH (215 aa).

Lysine 80 is modified (N6-acetyllysine).

It belongs to the UPF0502 family.

In Shigella flexneri serotype 5b (strain 8401), this protein is UPF0502 protein YceH.